The following is a 371-amino-acid chain: Maltose/maltodextrin import ATP-binding protein MalK (371 aa).

An ABC transporter domain is found at 4–234 (VQLQNVTKAW…PADRFVAGFI (231 aa)). Residue 36 to 43 (GPSGCGKS) participates in ATP binding.

Belongs to the ABC transporter superfamily. Maltooligosaccharide importer (TC 3.A.1.1.1) family. The complex is composed of two ATP-binding proteins (MalK), two transmembrane proteins (MalG and MalK) and a solute-binding protein (MalE).

It is found in the cell inner membrane. It catalyses the reaction D-maltose(out) + ATP + H2O = D-maltose(in) + ADP + phosphate + H(+). Part of the ABC transporter complex MalEFGK involved in maltose/maltodextrin import. Responsible for energy coupling to the transport system. The chain is Maltose/maltodextrin import ATP-binding protein MalK from Escherichia coli O6:H1 (strain CFT073 / ATCC 700928 / UPEC).